The sequence spans 549 residues: MFS-type transporter TwmF (549 aa).

4 helical membrane passes run 29–49 (IVIG…VLTI), 63–83 (NFIW…PLFG), 99–119 (VAIF…AMLI), and 126–146 (GVGS…LVPL). Asn-151 is a glycosylation site (N-linked (GlcNAc...) asparagine). 10 helical membrane passes run 155–175 (ILMS…GAIV), 182–202 (WVFY…FIFL), 221–241 (LVGN…LSYA), 249–269 (SWHT…FAGL), 291–311 (IILA…LFFL), 328–348 (VALL…AIAL), 355–375 (KPVH…FTLF), 390–410 (IVAF…QAFI), 421–441 (AWYF…AAIF), and 502–522 (VSIA…DVGL).

The protein belongs to the major facilitator superfamily.

The protein resides in the membrane. Functionally, MFS efflux transporter; part of the gene cluster that mediates the biosynthesis of wortmanamides A and B, reduced long-chain polyketides amidated with a specific omega-amino acid, 5-aminopentanoic acid (5PA). The sequence is that of MFS-type transporter TwmF from Talaromyces wortmannii (Penicillium wortmannii).